A 148-amino-acid chain; its full sequence is Large ribosomal subunit protein bL9 (148 aa).

The protein belongs to the bacterial ribosomal protein bL9 family.

In terms of biological role, binds to the 23S rRNA. This is Large ribosomal subunit protein bL9 from Desulfatibacillum aliphaticivorans.